The sequence spans 285 residues: 1-deoxypentalenic acid 11-beta-hydroxylase (285 aa).

R117 lines the substrate pocket. The Fe cation site is built by H137 and D139. 2-oxoglutarate contacts are provided by residues 137-139 (HQD) and W153. R188 contacts substrate. Position 226 (H226) interacts with Fe cation. Positions 228 and 240 each coordinate 2-oxoglutarate.

This sequence belongs to the PhyH family. Fe cation serves as cofactor. L-ascorbate is required as a cofactor.

It carries out the reaction 1-deoxypentalenate + 2-oxoglutarate + O2 = 1-deoxy-11beta-hydroxypentalenate + succinate + CO2. The protein operates within antibiotic biosynthesis; neopentalenolactone biosynthesis. In terms of biological role, catalyzes the conversion of 1-deoxypentalenic acid to 11-beta-hydroxy-1-deoxypentalenic acid in the biosynthesis of neopentalenolactone antibiotic. This chain is 1-deoxypentalenic acid 11-beta-hydroxylase (ptlH), found in Streptomyces avermitilis (strain ATCC 31267 / DSM 46492 / JCM 5070 / NBRC 14893 / NCIMB 12804 / NRRL 8165 / MA-4680).